Here is a 667-residue protein sequence, read N- to C-terminus: WD40 repeat-containing protein DDB_G0271002 (667 aa).

WD repeat units follow at residues 165-204 and 210-249; these read NHGV…PQET and KHKH…LLRI. Positions 278 to 293 are enriched in low complexity; the sequence is SSNSRDNNNNNSNSNN. Disordered regions lie at residues 278 to 301, 316 to 345, and 389 to 440; these read SSNS…GIII, LVEN…DNDD, and DIIF…ATTT. Positions 325 to 345 are enriched in acidic residues; sequence PMPEEEEEEEEEEVNQVDNDD. Low complexity predominate over residues 400-410; the sequence is NQHQQQQQQNQ. Positions 411–428 are enriched in acidic residues; that stretch reads EIEEEGQEGQEEQEDGTE. Positions 429–440 are enriched in low complexity; sequence NENNQGTIATTT.

The sequence is that of WD40 repeat-containing protein DDB_G0271002 from Dictyostelium discoideum (Social amoeba).